The primary structure comprises 273 residues: Cysteine protease S273R (273 aa).

Catalysis depends on residues His-168 and Asn-187. Gln-226 is a substrate binding site. The Nucleophile role is filled by Cys-232.

Belongs to the peptidase C63 family.

The protein resides in the host cytoplasm. It is found in the virion. In terms of biological role, cysteine protease that plays several role during infection including processing of the structural polyprotein or inhibition of the host immune response. Catalyzes the maturation of the pp220 and pp62 polyprotein precursors into core-shell proteins. Plays a role in the disruption of host pyroptosis via specific cleavage of gasdermin D/GSDMD. In addition, strongly decreases the host cGAS-STING signaling by targeting IKBKE via its enzymatic activity. Also impairs host FOXJ1-mediated antiviral effect via degradation of FOXJ1. Cleaves host G3BP1 inducing loss of stress granules formation. Interacts with and induces the degradation of host STAT2 via polyubiquitination of the latter. The polypeptide is Cysteine protease S273R (Ornithodoros (relapsing fever ticks)).